Here is a 147-residue protein sequence, read N- to C-terminus: Small ribosomal subunit protein eS19 (147 aa).

It belongs to the eukaryotic ribosomal protein eS19 family. In terms of assembly, component of the small ribosomal subunit.

The protein resides in the cytoplasm. The protein localises to the nucleus. Functionally, component of the small ribosomal subunit. The ribosome is a large ribonucleoprotein complex responsible for the synthesis of proteins in the cell. Required for pre-rRNA processing and maturation of 40S ribosomal subunits. This Ictalurus punctatus (Channel catfish) protein is Small ribosomal subunit protein eS19 (rps19).